A 316-amino-acid chain; its full sequence is Aspartate carbamoyltransferase catalytic subunit (316 aa).

2 residues coordinate carbamoyl phosphate: Arg-58 and Thr-59. Residue Lys-86 participates in L-aspartate binding. Residues Arg-108, His-136, and Gln-139 each coordinate carbamoyl phosphate. L-aspartate contacts are provided by Arg-169 and Arg-223. Gly-265 and Pro-266 together coordinate carbamoyl phosphate.

It belongs to the aspartate/ornithine carbamoyltransferase superfamily. ATCase family. As to quaternary structure, heterododecamer (2C3:3R2) of six catalytic PyrB chains organized as two trimers (C3), and six regulatory PyrI chains organized as three dimers (R2).

It carries out the reaction carbamoyl phosphate + L-aspartate = N-carbamoyl-L-aspartate + phosphate + H(+). It participates in pyrimidine metabolism; UMP biosynthesis via de novo pathway; (S)-dihydroorotate from bicarbonate: step 2/3. Its function is as follows. Catalyzes the condensation of carbamoyl phosphate and aspartate to form carbamoyl aspartate and inorganic phosphate, the committed step in the de novo pyrimidine nucleotide biosynthesis pathway. The protein is Aspartate carbamoyltransferase catalytic subunit of Anaeromyxobacter sp. (strain Fw109-5).